Here is a 180-residue protein sequence, read N- to C-terminus: Endoribonuclease YbeY (180 aa).

Residues histidine 149, histidine 153, and histidine 159 each coordinate Zn(2+).

The protein belongs to the endoribonuclease YbeY family. The cofactor is Zn(2+).

It is found in the cytoplasm. In terms of biological role, single strand-specific metallo-endoribonuclease involved in late-stage 70S ribosome quality control and in maturation of the 3' terminus of the 16S rRNA. The protein is Endoribonuclease YbeY of Prochlorococcus marinus (strain MIT 9515).